The following is a 60-amino-acid chain: Large ribosomal subunit protein bL32 (60 aa).

The segment covering 1–19 (MAVPKRRTSKRRKRARNTH) has biased composition (basic residues). Residues 1 to 20 (MAVPKRRTSKRRKRARNTHK) are disordered.

The protein belongs to the bacterial ribosomal protein bL32 family.

The polypeptide is Large ribosomal subunit protein bL32 (Gemmatimonas aurantiaca (strain DSM 14586 / JCM 11422 / NBRC 100505 / T-27)).